A 154-amino-acid polypeptide reads, in one-letter code: 3-dehydroquinate dehydratase (154 aa).

The Proton acceptor role is filled by Tyr22. Substrate contacts are provided by Asn73, His79, and Asp86. Catalysis depends on His99, which acts as the Proton donor. Substrate-binding positions include 100–101 (LS) and Arg110.

The protein belongs to the type-II 3-dehydroquinase family. Homododecamer.

It carries out the reaction 3-dehydroquinate = 3-dehydroshikimate + H2O. It participates in metabolic intermediate biosynthesis; chorismate biosynthesis; chorismate from D-erythrose 4-phosphate and phosphoenolpyruvate: step 3/7. Its function is as follows. Catalyzes a trans-dehydration via an enolate intermediate. The sequence is that of 3-dehydroquinate dehydratase from Carboxydothermus hydrogenoformans (strain ATCC BAA-161 / DSM 6008 / Z-2901).